Here is a 195-residue protein sequence, read N- to C-terminus: Protein lin-28 homolog A (195 aa).

Positions 33–106 constitute a CSD domain; the sequence is QGSGVCKWFN…GLESTQVTGP (74 aa). Positions 98 to 127 are disordered; the sequence is LESTQVTGPGGAPCIGSERRPKVKGQQKRR. Positions 107-130 are flexible linker; that stretch reads GGAPCIGSERRPKVKGQQKRRQRG. Over residues 118–127 the composition is skewed to basic residues; it reads PKVKGQQKRR. CCHC-type zinc fingers lie at residues 131–148 and 153–170; these read DRCY…ECKL and KKCH…QCPE. Residues Cys133, Cys136, His141, Cys146, Cys155, Cys158, His163, and Cys168 each contribute to the Zn(2+) site.

It belongs to the lin-28 family. As to quaternary structure, monomer.

The protein localises to the cytoplasm. Its subcellular location is the rough endoplasmic reticulum. The protein resides in the P-body. It localises to the stress granule. It is found in the nucleus. The protein localises to the nucleolus. RNA-binding protein that inhibits processing of pre-let-7 miRNAs and regulates translation of mRNAs that control developmental timing, pluripotency and metabolism. Seems to recognize a common structural G-quartet (G4) feature in its miRNA and mRNA targets. 'Translational enhancer' that drives specific mRNAs to polysomes and increases the efficiency of protein synthesis. Its association with the translational machinery and target mRNAs results in an increased number of initiation events per molecule of mRNA and, indirectly, in mRNA stabilization. Suppressor of microRNA (miRNA) biogenesis, including that of let-7. Binds specific target miRNA precursors (pre-miRNAs), recognizing an 5'-GGAG-3' motif found in their terminal loop, and recruits uridylyltransferase. This results in the terminal uridylation of target pre-miRNAs. Uridylated pre-miRNAs fail to be processed by Dicer and undergo degradation. Localized to the periendoplasmic reticulum area, binds to a large number of spliced mRNAs and inhibits the translation of mRNAs destined for the ER, reducing the synthesis of transmembrane proteins, ER or Golgi lumen proteins, and secretory proteins. Binds to and enhances the translation of mRNAs for several metabolic enzymes, increasing glycolysis and oxidative phosphorylation. Which, with the let-7 repression may enhance tissue repair in adult tissue. The polypeptide is Protein lin-28 homolog A (lin28a) (Xenopus laevis (African clawed frog)).